The following is a 503-amino-acid chain: Putative aldehyde dehydrogenase-like protein C9E9.09c (503 aa).

An NAD(+)-binding site is contributed by 247 to 252 (GSTGVG). The residue at position 248 (Ser248) is a Phosphoserine. The active-site Proton acceptor is Glu270. Cys304 functions as the Nucleophile in the catalytic mechanism. Phosphoserine is present on Ser501.

The protein belongs to the aldehyde dehydrogenase family.

The polypeptide is Putative aldehyde dehydrogenase-like protein C9E9.09c (Schizosaccharomyces pombe (strain 972 / ATCC 24843) (Fission yeast)).